The sequence spans 460 residues: Squalene synthase (460 aa).

A helical transmembrane segment spans residues 425-445 (ISILFVFFIILVCLAVIFYVF).

The protein belongs to the phytoene/squalene synthase family. As to quaternary structure, interacts with pof14. It depends on Mg(2+) as a cofactor.

The protein resides in the endoplasmic reticulum membrane. The catalysed reaction is 2 (2E,6E)-farnesyl diphosphate + NADPH + H(+) = squalene + 2 diphosphate + NADP(+). The enzyme catalyses 2 (2E,6E)-farnesyl diphosphate + NADH + H(+) = squalene + 2 diphosphate + NAD(+). It functions in the pathway terpene metabolism; lanosterol biosynthesis; lanosterol from farnesyl diphosphate: step 1/3. Its pathway is steroid metabolism; ergosterol biosynthesis. Squalene synthase; part of the third module of ergosterol biosynthesis pathway that includes by the late steps of the pathway. Erg9 produces squalene from 2 farnesyl pyrophosphate moieties. The third module or late pathway involves the ergosterol synthesis itself through consecutive reactions that mainly occur in the endoplasmic reticulum (ER) membrane. Firstly, the squalene synthase erg9 catalyzes the condensation of 2 farnesyl pyrophosphate moieties to form squalene, which is the precursor of all steroids. Secondly, squalene is converted into lanosterol by the consecutive action of the squalene epoxidase erg1 and the lanosterol synthase erg7. The lanosterol 14-alpha-demethylase erg11/cyp1 catalyzes C14-demethylation of lanosterol to produce 4,4'-dimethyl cholesta-8,14,24-triene-3-beta-ol. In the next steps, a complex process involving various demethylation, reduction and desaturation reactions catalyzed by the C-14 reductase erg24 and the C-4 demethylation complex erg25-erg26-erg27 leads to the production of zymosterol. Erg28 likely functions in the C-4 demethylation complex reaction by tethering erg26 and Erg27 to the endoplasmic reticulum or to facilitate interaction between these proteins. Then, the sterol 24-C-methyltransferase erg6 catalyzes the methyl transfer from S-adenosyl-methionine to the C-24 of zymosterol to form fecosterol. The C-8 sterol isomerase erg2 catalyzes the reaction which results in unsaturation at C-7 in the B ring of sterols and thus converts fecosterol to episterol. The sterol-C5-desaturases erg31 and erg32 then catalyze the introduction of a C-5 double bond in the B ring to produce 5-dehydroepisterol. The C-22 sterol desaturase erg5 further converts 5-dehydroepisterol into ergosta-5,7,22,24(28)-tetraen-3beta-ol by forming the C-22(23) double bond in the sterol side chain. Finally, ergosta-5,7,22,24(28)-tetraen-3beta-ol is substrate of the C-24(28) sterol reductase erg4 to produce ergosterol. In the genus Schizosaccharomyces, a second route exists between lanosterol and fecosterol, via the methylation of lanosterol to eburicol by erg6, followed by C14-demethylation by erg11/cyp1 and C4-demethylation by the demethylation complex erg25-erg26-erg27. The chain is Squalene synthase from Schizosaccharomyces pombe (strain 972 / ATCC 24843) (Fission yeast).